The sequence spans 232 residues: Ribonuclease P protein component 3 (232 aa).

This sequence belongs to the eukaryotic/archaeal RNase P protein component 3 family. In terms of assembly, consists of a catalytic RNA component and at least 4-5 protein subunits. Forms a subcomplex with Rnp2 which stimulates the catalytic RNA.

It is found in the cytoplasm. The catalysed reaction is Endonucleolytic cleavage of RNA, removing 5'-extranucleotides from tRNA precursor.. Functionally, part of ribonuclease P, a protein complex that generates mature tRNA molecules by cleaving their 5'-ends. This is Ribonuclease P protein component 3 from Methanocaldococcus jannaschii (strain ATCC 43067 / DSM 2661 / JAL-1 / JCM 10045 / NBRC 100440) (Methanococcus jannaschii).